The following is a 148-amino-acid chain: Globin, monomeric component M-IV (148 aa).

One can recognise a Globin domain in the interval Gly2–Gln147. Residue His91 participates in heme b binding.

In terms of assembly, monomer.

The sequence is that of Globin, monomeric component M-IV from Glycera dibranchiata (Bloodworm).